A 499-amino-acid chain; its full sequence is Endoglucanase 3 (499 aa).

The first 19 residues, 1–19, serve as a signal peptide directing secretion; sequence MALLRCLFLLAVLLPHRNA. Residue aspartate 88 is the Nucleophile of the active site. Active-site residues include histidine 416, aspartate 467, and glutamate 476.

The protein belongs to the glycosyl hydrolase 9 (cellulase E) family. Expressed in flowers.

It is found in the secreted. It catalyses the reaction Endohydrolysis of (1-&gt;4)-beta-D-glucosidic linkages in cellulose, lichenin and cereal beta-D-glucans.. This chain is Endoglucanase 3 (GLU8), found in Oryza sativa subsp. japonica (Rice).